A 338-amino-acid chain; its full sequence is MTRTITPSITDDDALIEATLRPRALDDYVGQEKAKGNLRIFIDAARGRDEALDHVLLYGPPGLGKTTLANIIACEMGVNIKSTSGPVIERPGDLAAILTNLEAHDVLFIDEIHRLSHVVEEILYPAMEDFQLDIIIGQGPSARTIKLDLPKFTLVGATTRAGLLSSPLRDRFGVISRLEFYTDEELAFIITRSARILGMEIKTDGAAEMARRSRGTPRIANRLLRRVRDFAQVKADGVITMKVVQDALALLEIDEMGFDQMDRMILLTIIDKFGGGPVGLDTIAAAISEESDTIEDVYEPFLIQNGFLNRTPRGRVATKAAYLHFGRIVPEPPQGKLF.

The segment at 1 to 181 is large ATPase domain (RuvB-L); it reads MTRTITPSIT…FGVISRLEFY (181 aa). Residues leucine 20, arginine 21, glycine 62, lysine 65, threonine 66, threonine 67, 128-130, arginine 171, tyrosine 181, and arginine 218 contribute to the ATP site; that span reads EDF. Residue threonine 66 participates in Mg(2+) binding. Positions 182–252 are small ATPAse domain (RuvB-S); the sequence is TDEELAFIIT…VVQDALALLE (71 aa). A head domain (RuvB-H) region spans residues 255–338; sequence EMGFDQMDRM…VPEPPQGKLF (84 aa). The DNA site is built by arginine 310 and arginine 315.

Belongs to the RuvB family. As to quaternary structure, homohexamer. Forms an RuvA(8)-RuvB(12)-Holliday junction (HJ) complex. HJ DNA is sandwiched between 2 RuvA tetramers; dsDNA enters through RuvA and exits via RuvB. An RuvB hexamer assembles on each DNA strand where it exits the tetramer. Each RuvB hexamer is contacted by two RuvA subunits (via domain III) on 2 adjacent RuvB subunits; this complex drives branch migration. In the full resolvosome a probable DNA-RuvA(4)-RuvB(12)-RuvC(2) complex forms which resolves the HJ.

The protein localises to the cytoplasm. The catalysed reaction is ATP + H2O = ADP + phosphate + H(+). Its function is as follows. The RuvA-RuvB-RuvC complex processes Holliday junction (HJ) DNA during genetic recombination and DNA repair, while the RuvA-RuvB complex plays an important role in the rescue of blocked DNA replication forks via replication fork reversal (RFR). RuvA specifically binds to HJ cruciform DNA, conferring on it an open structure. The RuvB hexamer acts as an ATP-dependent pump, pulling dsDNA into and through the RuvAB complex. RuvB forms 2 homohexamers on either side of HJ DNA bound by 1 or 2 RuvA tetramers; 4 subunits per hexamer contact DNA at a time. Coordinated motions by a converter formed by DNA-disengaged RuvB subunits stimulates ATP hydrolysis and nucleotide exchange. Immobilization of the converter enables RuvB to convert the ATP-contained energy into a lever motion, pulling 2 nucleotides of DNA out of the RuvA tetramer per ATP hydrolyzed, thus driving DNA branch migration. The RuvB motors rotate together with the DNA substrate, which together with the progressing nucleotide cycle form the mechanistic basis for DNA recombination by continuous HJ branch migration. Branch migration allows RuvC to scan DNA until it finds its consensus sequence, where it cleaves and resolves cruciform DNA. The polypeptide is Holliday junction branch migration complex subunit RuvB (Geotalea uraniireducens (strain Rf4) (Geobacter uraniireducens)).